Reading from the N-terminus, the 89-residue chain is Small ribosomal subunit protein uS14A (89 aa).

It belongs to the universal ribosomal protein uS14 family. Contacts proteins S3 and S10. Part of the 30S ribosomal subunit.

Its function is as follows. Binds 16S rRNA, required for the assembly of 30S particles and may also be responsible for determining the conformation of the 16S rRNA at the A site. Functionally, non-essential protein. A second form of uS14, it can integrate into the 30S subunit where it partially compensates for loss of the major uS14 protein (AC P12878) in restoring 70S formation, although it does not seem to be incorporated into the ribosome as well as the major uS14. The sequence is that of Small ribosomal subunit protein uS14A from Bacillus subtilis (strain 168).